The sequence spans 398 residues: Dual-specificity RNA methyltransferase RlmN (398 aa).

E119 acts as the Proton acceptor in catalysis. A Radical SAM core domain is found at 125-364; sequence EGDRATLCVS…TIVRKTRGDD (240 aa). C132 and C369 are disulfide-bonded. C139, C143, and C146 together coordinate [4Fe-4S] cluster. S-adenosyl-L-methionine-binding positions include 193–194, S225, 247–249, and N326; these read GE and SLH. C369 serves as the catalytic S-methylcysteine intermediate.

Belongs to the radical SAM superfamily. RlmN family. The cofactor is [4Fe-4S] cluster.

It is found in the cytoplasm. The enzyme catalyses adenosine(2503) in 23S rRNA + 2 reduced [2Fe-2S]-[ferredoxin] + 2 S-adenosyl-L-methionine = 2-methyladenosine(2503) in 23S rRNA + 5'-deoxyadenosine + L-methionine + 2 oxidized [2Fe-2S]-[ferredoxin] + S-adenosyl-L-homocysteine. It catalyses the reaction adenosine(37) in tRNA + 2 reduced [2Fe-2S]-[ferredoxin] + 2 S-adenosyl-L-methionine = 2-methyladenosine(37) in tRNA + 5'-deoxyadenosine + L-methionine + 2 oxidized [2Fe-2S]-[ferredoxin] + S-adenosyl-L-homocysteine. In terms of biological role, specifically methylates position 2 of adenine 2503 in 23S rRNA and position 2 of adenine 37 in tRNAs. m2A2503 modification seems to play a crucial role in the proofreading step occurring at the peptidyl transferase center and thus would serve to optimize ribosomal fidelity. The protein is Dual-specificity RNA methyltransferase RlmN of Yersinia enterocolitica serotype O:8 / biotype 1B (strain NCTC 13174 / 8081).